We begin with the raw amino-acid sequence, 346 residues long: Serpentine receptor class gamma-20 (346 aa).

The next 7 helical transmembrane spans lie at 27-47 (VMLS…SAVL), 69-89 (FFVL…IEVL), 106-128 (PFFF…CLAF), 157-177 (ILAP…WNIL), 212-232 (IPCL…LTML), 254-274 (TMLF…LPGI), and 279-299 (LLIS…ALIL).

It belongs to the nematode receptor-like protein srg family.

It is found in the membrane. This Caenorhabditis elegans protein is Serpentine receptor class gamma-20 (srg-20).